The primary structure comprises 327 residues: Glutaminase 1 (327 aa).

7 residues coordinate substrate: Ser74, Asn126, Glu170, Asn177, Tyr201, Tyr253, and Val271.

Belongs to the glutaminase family. In terms of assembly, homotetramer.

The catalysed reaction is L-glutamine + H2O = L-glutamate + NH4(+). This is Glutaminase 1 (glsA1) from Bacillus subtilis (strain 168).